The following is a 142-amino-acid chain: Type II secretion system core protein G (142 aa).

Positions 1 to 8 (MRRQSQRG) are cleaved as a propeptide — leader sequence. Phenylalanine 9 carries the post-translational modification N-methylphenylalanine. Residues 9 to 29 (FTLLEIMVVIVIMGILASLVV) form a helical membrane-spanning segment. The disordered stretch occupies residues 122-142 (SGQDGVPGTDDDIGNWTLSKK).

This sequence belongs to the GSP G family. In terms of assembly, type II secretion system is composed of four main components: the outer membrane complex, the inner membrane complex, the cytoplasmic secretion ATPase and the periplasm-spanning pseudopilus. Forms homomultimers. In terms of processing, cleaved by the prepilin peptidase. Post-translationally, methylated by prepilin peptidase at the amino group of the N-terminal phenylalanine once the leader sequence is cleaved.

Its subcellular location is the cell inner membrane. Core component of the type II secretion system required for the energy-dependent secretion of extracellular factors such as proteases and toxins from the periplasm. Pseudopilin (pilin-like) protein that polymerizes to form the pseudopilus. Further polymerization triggers pseudopilus growth. This Klebsiella michiganensis (strain ATCC 8724 / DSM 4798 / JCM 20051 / NBRC 3318 / NRRL B-199 / KCTC 1686 / BUCSAV 143 / CCM 1901) protein is Type II secretion system core protein G.